The following is a 533-amino-acid chain: 2,3-bisphosphoglycerate-independent phosphoglycerate mutase (533 aa).

Mn(2+) contacts are provided by Asp-15 and Ser-65. Ser-65 (phosphoserine intermediate) is an active-site residue. Residues His-126, 156–157 (RD), Arg-188, Arg-194, 258–261 (RPDR), and Lys-331 contribute to the substrate site. 5 residues coordinate Mn(2+): Asp-398, His-402, Asp-439, His-440, and His-457.

Belongs to the BPG-independent phosphoglycerate mutase family. Monomer. Mn(2+) is required as a cofactor.

It carries out the reaction (2R)-2-phosphoglycerate = (2R)-3-phosphoglycerate. Its pathway is carbohydrate degradation; glycolysis; pyruvate from D-glyceraldehyde 3-phosphate: step 3/5. Functionally, catalyzes the interconversion of 2-phosphoglycerate and 3-phosphoglycerate. The polypeptide is 2,3-bisphosphoglycerate-independent phosphoglycerate mutase (Trichormus variabilis (strain ATCC 29413 / PCC 7937) (Anabaena variabilis)).